The following is a 282-amino-acid chain: Bifunctional protein FolD (282 aa).

NADP(+)-binding positions include 167-169 and Ser-192; that span reads GRS.

Belongs to the tetrahydrofolate dehydrogenase/cyclohydrolase family. As to quaternary structure, homodimer.

It catalyses the reaction (6R)-5,10-methylene-5,6,7,8-tetrahydrofolate + NADP(+) = (6R)-5,10-methenyltetrahydrofolate + NADPH. The enzyme catalyses (6R)-5,10-methenyltetrahydrofolate + H2O = (6R)-10-formyltetrahydrofolate + H(+). The protein operates within one-carbon metabolism; tetrahydrofolate interconversion. In terms of biological role, catalyzes the oxidation of 5,10-methylenetetrahydrofolate to 5,10-methenyltetrahydrofolate and then the hydrolysis of 5,10-methenyltetrahydrofolate to 10-formyltetrahydrofolate. In Acidobacterium capsulatum (strain ATCC 51196 / DSM 11244 / BCRC 80197 / JCM 7670 / NBRC 15755 / NCIMB 13165 / 161), this protein is Bifunctional protein FolD.